Consider the following 545-residue polypeptide: 4-coumarate--CoA ligase 2 (545 aa).

The ATP site is built by serine 192, serine 193, glycine 194, threonine 195, threonine 196, and lysine 200. Positions 242 and 246 each coordinate (E)-4-coumaroyl-AMP. Lysine 263 contributes to the CoA binding site. Residues 265-334 form an SBD1 region; the sequence is DIAQFLELIP…AKFPNAKLGQ (70 aa). (E)-4-coumaroyl-AMP contacts are provided by alanine 312, glutamine 334, glycine 335, threonine 339, and methionine 347. The ATP site is built by glutamine 334, glycine 335, and threonine 339. The segment at 335 to 402 is SBD2; sequence GYGMTEAGPV…IRGDQIMKGY (68 aa). Residues aspartate 423 and arginine 438 each coordinate ATP. Residues lysine 440 and lysine 444 each coordinate (E)-4-coumaroyl-AMP. The CoA site is built by lysine 446 and glycine 447. Lysine 529 contacts ATP.

Belongs to the ATP-dependent AMP-binding enzyme family. Mg(2+) serves as cofactor.

It catalyses the reaction (E)-4-coumarate + ATP + CoA = (E)-4-coumaroyl-CoA + AMP + diphosphate. The enzyme catalyses (E)-4-coumarate + ATP + H(+) = (E)-4-coumaroyl-AMP + diphosphate. The catalysed reaction is (E)-4-coumaroyl-AMP + CoA = (E)-4-coumaroyl-CoA + AMP + H(+). Its pathway is phytoalexin biosynthesis; 3,4',5-trihydroxystilbene biosynthesis; 3,4',5-trihydroxystilbene from trans-4-coumarate: step 1/2. Carboxylate--CoA ligase that may use 4-coumarate as substrate. Follows a two-step reaction mechanism, wherein the carboxylate substrate first undergoes adenylation by ATP, followed by a thioesterification in the presence of CoA to yield the final CoA thioester. In Solanum tuberosum (Potato), this protein is 4-coumarate--CoA ligase 2 (4CL2).